Here is a 146-residue protein sequence, read N- to C-terminus: Universal stress protein MTH_1154 (146 aa).

The protein belongs to the universal stress protein A family.

The chain is Universal stress protein MTH_1154 from Methanothermobacter thermautotrophicus (strain ATCC 29096 / DSM 1053 / JCM 10044 / NBRC 100330 / Delta H) (Methanobacterium thermoautotrophicum).